Consider the following 199-residue polypeptide: MPHKRRNRVHANQRNFTARRVSVAKLSSAPPNVLVESCNGSHADNSSPDSPKAKEGAMTNGKNPEIKLAVPKCNTTVRKQNEAHIISNIKLDMNLNKDSNFIAPQITKKMNFAPNRVVFGVLVPLNVNDSVLVPHNRKPDALKHTSKESESCKAISEPQLADYAEKVDPMIMAVKEPVLHLDWEPGPFDFFGAYRRTYN.

Residues methionine 1–alanine 11 show a composition bias toward basic residues. Disordered regions lie at residues methionine 1–valine 23 and glutamate 36–asparagine 60. Residues cysteine 38 to aspartate 49 show a composition bias toward polar residues.

This sequence belongs to the PPP1R35 family. As to quaternary structure, interacts with Ana3; this complex is recruited to daughter centrioles before their conversion to centrosomes.

The protein localises to the cytoplasm. The protein resides in the cytoskeleton. It localises to the microtubule organizing center. It is found in the centrosome. Its subcellular location is the centriole. Participates in the later stages of centriole assembly through the interaction with Ana3 leading to the centriole to centrosome conversion in somatic cells. The protein is Protein PPP1R35 homolog of Drosophila melanogaster (Fruit fly).